The following is a 383-amino-acid chain: Acetylornithine deacetylase (383 aa).

His80 lines the Zn(2+) pocket. Residue Asp82 is part of the active site. Asp112 serves as a coordination point for Zn(2+). Glu144 is a catalytic residue. Residues Glu145, Glu169, and His355 each coordinate Zn(2+).

The protein belongs to the peptidase M20A family. ArgE subfamily. In terms of assembly, homodimer. Zn(2+) is required as a cofactor. Co(2+) serves as cofactor. Requires glutathione as cofactor.

It localises to the cytoplasm. It carries out the reaction N(2)-acetyl-L-ornithine + H2O = L-ornithine + acetate. Its pathway is amino-acid biosynthesis; L-arginine biosynthesis; L-ornithine from N(2)-acetyl-L-ornithine (linear): step 1/1. Catalyzes the hydrolysis of the amide bond of N(2)-acetylated L-amino acids. Cleaves the acetyl group from N-acetyl-L-ornithine to form L-ornithine, an intermediate in L-arginine biosynthesis pathway, and a branchpoint in the synthesis of polyamines. The sequence is that of Acetylornithine deacetylase from Pectobacterium carotovorum subsp. carotovorum (strain PC1).